The following is a 65-amino-acid chain: Small ribosomal subunit protein eS27 (65 aa).

Zn(2+)-binding residues include Cys20, Cys23, Cys39, and Cys42. The C4-type zinc finger occupies 20–42 (CIDCGNEQIVFSNPATTVRCLVC).

The protein belongs to the eukaryotic ribosomal protein eS27 family. As to quaternary structure, part of the 30S ribosomal subunit. Zn(2+) serves as cofactor.

The polypeptide is Small ribosomal subunit protein eS27 (Thermococcus onnurineus (strain NA1)).